The primary structure comprises 261 residues: MVVGGGGEGDQKRSSGEMMAMASLFNDQQNPIQQFQVKFKEVETNFKTWLSKQSIPVEAAVVSTMSGVQGAFIGGLMGTLSPEMPQAGVDPQAIASMKQAQALVGGPWVQARNFAAITGVNAGIASVMKRIRGKEDIESAVVAALGSGFAYSLVSQGLQGQPMNAITTAAGFAVFQGVFFKLGERFSKPSTEDPFFTRGRTMLVKLGLEKYEKNFKKGLLTDPTLPLLTDSALKDANIPPGPRLMILDHIQRDPEIKGKRK.

4 helical membrane passes run 59 to 77 (AAVV…GGLM), 113 to 129 (NFAA…SVMK), 139 to 155 (SAVV…SLVS), and 163 to 180 (MNAI…GVFF).

Belongs to the Tim17/Tim22/Tim23 family. Probable component of a protein-conducting channel made of HP30-1, HP30-2 and HP20 that mediates the import of transit sequence-less proteins into the chloroplastic inner membrane. Interacts with CEQORH.

Its subcellular location is the plastid. The protein resides in the chloroplast inner membrane. Its function is as follows. Together with HP30-2 and HP20, triggers the import and insertion of transit sequence-less multi-pass transmembrane proteins (e.g. CEQORH) into the chloroplastic inner membrane. The protein is Chloroplastic import inner membrane translocase subunit HP30-1 of Arabidopsis thaliana (Mouse-ear cress).